The chain runs to 376 residues: 5-amino-6-(D-ribitylamino)uracil--L-tyrosine 4-hydroxyphenyl transferase 1 (376 aa).

In terms of domain architecture, Radical SAM core spans 50 to 284 (VTYVVNRNIN…AISRILLHGH (235 aa)). Residues C64, C68, and C71 each contribute to the [4Fe-4S] cluster site.

It belongs to the radical SAM superfamily. CofH family. In terms of assembly, consists of two subunits, CofG and CofH. The cofactor is [4Fe-4S] cluster.

It catalyses the reaction 5-amino-6-(D-ribitylamino)uracil + L-tyrosine + S-adenosyl-L-methionine = 5-amino-5-(4-hydroxybenzyl)-6-(D-ribitylimino)-5,6-dihydrouracil + 2-iminoacetate + 5'-deoxyadenosine + L-methionine + H(+). The protein operates within cofactor biosynthesis; coenzyme F0 biosynthesis. Its function is as follows. Catalyzes the radical-mediated synthesis of 5-amino-5-(4-hydroxybenzyl)-6-(D-ribitylimino)-5,6-dihydrouracil from 5-amino-6-(D-ribitylamino)uracil and L-tyrosine. The chain is 5-amino-6-(D-ribitylamino)uracil--L-tyrosine 4-hydroxyphenyl transferase 1 from Methanosarcina barkeri (strain Fusaro / DSM 804).